Reading from the N-terminus, the 243-residue chain is ATP-dependent dethiobiotin synthetase BioD (243 aa).

12–17 provides a ligand contact to ATP; the sequence is DVGKTF. A Mg(2+)-binding site is contributed by Thr-16. The active site involves Lys-37. Ser-41 is a binding site for substrate. ATP is bound by residues Asp-54, 115–118, and 179–180; these read EGCG and NM. 2 residues coordinate Mg(2+): Asp-54 and Glu-115.

It belongs to the dethiobiotin synthetase family. Homodimer. Mg(2+) is required as a cofactor.

The protein localises to the cytoplasm. It carries out the reaction (7R,8S)-7,8-diammoniononanoate + CO2 + ATP = (4R,5S)-dethiobiotin + ADP + phosphate + 3 H(+). The protein operates within cofactor biosynthesis; biotin biosynthesis; biotin from 7,8-diaminononanoate: step 1/2. Catalyzes a mechanistically unusual reaction, the ATP-dependent insertion of CO2 between the N7 and N8 nitrogen atoms of 7,8-diaminopelargonic acid (DAPA, also called 7,8-diammoniononanoate) to form a ureido ring. The protein is ATP-dependent dethiobiotin synthetase BioD of Caldicellulosiruptor bescii (strain ATCC BAA-1888 / DSM 6725 / KCTC 15123 / Z-1320) (Anaerocellum thermophilum).